Consider the following 336-residue polypeptide: Dihydroorotate dehydrogenase (quinone) (336 aa).

FMN-binding positions include 62-66 (AGLDK) and T86. Residue K66 participates in substrate binding. 111–115 (NRMGF) lines the substrate pocket. 2 residues coordinate FMN: N139 and N172. N172 is a substrate binding site. The active-site Nucleophile is S175. A substrate-binding site is contributed by N177. K217 and T245 together coordinate FMN. Substrate is bound at residue 246-247 (NT). FMN-binding positions include G268, G297, and 318-319 (YS).

The protein belongs to the dihydroorotate dehydrogenase family. Type 2 subfamily. As to quaternary structure, monomer. Requires FMN as cofactor.

The protein resides in the cell membrane. It catalyses the reaction (S)-dihydroorotate + a quinone = orotate + a quinol. The protein operates within pyrimidine metabolism; UMP biosynthesis via de novo pathway; orotate from (S)-dihydroorotate (quinone route): step 1/1. In terms of biological role, catalyzes the conversion of dihydroorotate to orotate with quinone as electron acceptor. The polypeptide is Dihydroorotate dehydrogenase (quinone) (Sodalis glossinidius (strain morsitans)).